We begin with the raw amino-acid sequence, 976 residues long: 3-O-beta-L-arabinopyranosyl-alpha-L-arabinofuranosidase (976 aa).

A signal peptide spans 1–28; that stretch reads MSHRNKALVAIVAGTALLISSGAAIGQA. Glu-190 serves as the catalytic Proton donor. Glu-315 (nucleophile) is an active-site residue. In terms of domain architecture, CBM6 spans 519–654; the sequence is LLVEEVENTV…DNTLDKFLLY (136 aa).

The protein belongs to the glycosyl hydrolase 39 family.

Its subcellular location is the secreted. The enzyme catalyses Hydrolysis of beta-L-Arap-(1-&gt;3)-L-Araf disaccharides from non-reducing terminals in branches of type II arabinogalactan attached to proteins.. Its function is as follows. Hydrolase involved in the degradation of the gum arabic arabinogalactan protein (AGP) and larch AGP. Catalyzes the release of 3-O-beta-L-arabinopyranosyl-L-arabinose (beta-L-Arap-(1-&gt;3)-L-Ara) from gum arabic AGP and larch AGP. Also cleaves a small amount of beta-L-Arap-(1-&gt;3)-L-Ara from sugar beet arabinan, but wheat AGP cannot be used as a substrate. Can also release 3-O-alpha-D-galactopyranosyl-L-arabinose (alpha-D-Galp-(1-&gt;3)-L-Ara) from gum arabic AGP, with low efficiency. In Bifidobacterium pseudocatenulatum, this protein is 3-O-beta-L-arabinopyranosyl-alpha-L-arabinofuranosidase.